The sequence spans 37 residues: Large ribosomal subunit protein bL36 (37 aa).

The protein belongs to the bacterial ribosomal protein bL36 family.

The chain is Large ribosomal subunit protein bL36 from Helicobacter pylori (strain HPAG1).